Consider the following 367-residue polypeptide: TATA-box-binding protein-like (367 aa).

The interval 1–26 (MKKQSKTHKVDYKYYNSGSKTSRNRN) is disordered. Over residues 16–26 (NSGSKTSRNRN) the composition is skewed to polar residues.

This sequence belongs to the TBP family.

This Acanthamoeba polyphaga (Amoeba) protein is TATA-box-binding protein-like.